Consider the following 89-residue polypeptide: Small ribosomal subunit protein uS14A (89 aa).

It belongs to the universal ribosomal protein uS14 family. In terms of assembly, part of the 30S ribosomal subunit. Contacts proteins S3 and S10.

Its function is as follows. Binds 16S rRNA, required for the assembly of 30S particles and may also be responsible for determining the conformation of the 16S rRNA at the A site. This is Small ribosomal subunit protein uS14A from Ligilactobacillus salivarius (strain UCC118) (Lactobacillus salivarius).